The sequence spans 388 residues: F-box protein At5g42460 (388 aa).

Positions 1–47 (MTIMSDLPRDLLAEILSRVPLTSLRAVRLTCKKWNDLSKDRSFLKKQ) constitute an F-box domain.

The sequence is that of F-box protein At5g42460 from Arabidopsis thaliana (Mouse-ear cress).